Consider the following 197-residue polypeptide: Probable GTP-binding protein EngB (197 aa).

Residues 22–195 enclose the EngB-type G domain; sequence QLPELALAGR…WRTILNHLKV (174 aa). GTP contacts are provided by residues 30–37, 57–61, 75–78, 142–145, and 174–176; these read GRSNVGKS, GKTQT, DVPG, TKAD, and FSS. The Mg(2+) site is built by S37 and T59.

This sequence belongs to the TRAFAC class TrmE-Era-EngA-EngB-Septin-like GTPase superfamily. EngB GTPase family. Mg(2+) is required as a cofactor.

In terms of biological role, necessary for normal cell division and for the maintenance of normal septation. This chain is Probable GTP-binding protein EngB, found in Shouchella clausii (strain KSM-K16) (Alkalihalobacillus clausii).